The following is a 170-amino-acid chain: MKNNPYIIWLTGLAGSGKTTIGQALYEKLKLKYKNLIYLDGDELREILGHYAYDRQGRIDMALKRAKFAKFLNDQGMMVIVTTISMFNEIYDYNRKQLKNYYEIYIECDMHELIQRDQKGLYTKALNKEIDNVVGVDIEFDKPEADLVINNSCRNNLEEKVELIIKKLAL.

The protein belongs to the APS kinase family.

The enzyme catalyses cytidine 5'-diphosphoramidate + ATP = cytidine 3'-phospho-5'-diphosphoramidate + ADP + H(+). It participates in capsule biogenesis; capsule polysaccharide biosynthesis. Its function is as follows. Involved in the biosynthesis of the O-methyl phosphoramidate (MeOPN) group found on the capsular polysaccharide (CPS) of C.jejuni. Catalyzes the ATP-dependent phosphorylation of cytidine diphosphoramidate (CDP-NH(2)) to form cytidine 3'-phosphate 5'-diphosphoramidate. Can also use other substrates such as the corresponding adenine and uridine diphosphoramidate derivatives or cytidine diphosphoramidate analogs, with lower efficiency. The polypeptide is Cytidine diphosphoramidate kinase (Campylobacter jejuni subsp. jejuni serotype O:2 (strain ATCC 700819 / NCTC 11168)).